Here is a 632-residue protein sequence, read N- to C-terminus: Myrcene synthase TPS3FN, chloroplastic (632 aa).

The transit peptide at 1 to 55 directs the protein to the chloroplast; the sequence is MHCMAVHQFSPSIVSSLPTISTYNNNHFCRFFTPKTSISPISKTKSKSSTCYPIQ. Residues R343, D380, D384, R524, and D527 each contribute to the (2E)-geranyl diphosphate site. Residues D380 and D384 each coordinate Mg(2+). The short motif at 380–384 is the DDXXD motif element; it reads DDIYD. Mg(2+) is bound by residues D527, T531, and E535.

It belongs to the terpene synthase family. Tpsb subfamily. Mg(2+) is required as a cofactor. It depends on Mn(2+) as a cofactor. Expressed in glandular trichomes two to four weeks after flowering onset.

Its subcellular location is the plastid. It is found in the chloroplast. It carries out the reaction (2E)-geranyl diphosphate = beta-myrcene + diphosphate. The protein operates within secondary metabolite biosynthesis; terpenoid biosynthesis. In terms of biological role, involved in monoterpene (C10) olefins biosynthesis, constituants of cannabinoids and terpenoids-rich resins. Catalyzes strictly the conversion of (2E)-geranyl diphosphate to beta-myrcene. The chain is Myrcene synthase TPS3FN, chloroplastic from Cannabis sativa (Hemp).